The primary structure comprises 484 residues: Putative tyramine receptor 2 (484 aa).

Residues 1–54 (MVRVELQAASLMNGSSAAEEPQDALVGGDACGGRRPPSVLGVRLAVPEWEVAVT) lie on the Extracellular side of the membrane. N-linked (GlcNAc...) asparagine glycosylation occurs at N13. The chain crosses the membrane as a helical span at residues 55–77 (AVSLSLIILITIVGNVLVVLSVF). Residues 78–87 (TYKPLRIVQN) are Cytoplasmic-facing. Residues 88–109 (FFIVSLAVADLTVAVLVMPFNV) traverse the membrane as a helical segment. The Extracellular segment spans residues 110–126 (AYSLIQRWVFGIVVCKM). An intrachain disulfide couples C124 to C203. Residues 127–147 (WLTCDVLCCTASILNLCAIAL) form a helical membrane-spanning segment. Topologically, residues 148-167 (DRYWAITDPINYAQKRTLRR) are cytoplasmic. The chain crosses the membrane as a helical span at residues 168–190 (VLAMIAGVWLLSGVISSPPLIGW). The Extracellular portion of the chain corresponds to 191-215 (NDWPMEFNDTTPCQLTEEQGYVIYS). Residue N198 is glycosylated (N-linked (GlcNAc...) asparagine). Residues 216–237 (SLGSFFIPLFIMTIVYVEIFIA) traverse the membrane as a helical segment. Residues 238-411 (TKRRLRERAK…LSKERRAART (174 aa)) are Cytoplasmic-facing. Over residues 253-280 (SAMKQQMAAQAVPSSVPSHDQESVSSET) the composition is skewed to polar residues. Disordered regions lie at residues 253–322 (SAMK…PAMV) and 350–383 (TTTT…PTPV). Residues 295-306 (EKRRKTKKKSKK) show a composition bias toward basic residues. Residues 350–360 (TTTTTTTTTTT) are compositionally biased toward low complexity. Positions 361–378 (AVTDSPRSRTASQKGSTA) are enriched in polar residues. A helical membrane pass occupies residues 412–433 (LGIIMGVFVVCWLPFFLMYVIV). Residues 434 to 448 (PFCNPSCKPSPKLVN) are Extracellular-facing. A helical membrane pass occupies residues 449–470 (FITWLGYINSALNPIIYTIFNL). Residues 471–484 (DFRRAFKKLLHFKT) lie on the Cytoplasmic side of the membrane.

Belongs to the G-protein coupled receptor 1 family.

It localises to the cell membrane. In terms of biological role, G-protein coupled receptor for tyramine, a known neurotransmitter and neuromodulator and direct precursor of octopamine. The sequence is that of Putative tyramine receptor 2 (GCR2) from Locusta migratoria (Migratory locust).